A 568-amino-acid polypeptide reads, in one-letter code: Urease subunit alpha (568 aa).

In terms of domain architecture, Urease spans 130-568; the sequence is GGIDTHIHFI…LPMAQRYFLF (439 aa). 3 residues coordinate Ni(2+): His135, His137, and Lys218. An N6-carboxylysine modification is found at Lys218. Substrate is bound at residue His220. Ni(2+) is bound by residues His247 and His273. His321 serves as the catalytic Proton donor. Asp361 contributes to the Ni(2+) binding site.

The protein belongs to the metallo-dependent hydrolases superfamily. Urease alpha subunit family. As to quaternary structure, heterotrimer of UreA (gamma), UreB (beta) and UreC (alpha) subunits. Three heterotrimers associate to form the active enzyme. The cofactor is Ni cation. Carboxylation allows a single lysine to coordinate two nickel ions.

The protein resides in the cytoplasm. It catalyses the reaction urea + 2 H2O + H(+) = hydrogencarbonate + 2 NH4(+). The protein operates within nitrogen metabolism; urea degradation; CO(2) and NH(3) from urea (urease route): step 1/1. This chain is Urease subunit alpha, found in Burkholderia vietnamiensis (strain G4 / LMG 22486) (Burkholderia cepacia (strain R1808)).